The sequence spans 426 residues: DUF724 domain-containing protein 9 (426 aa).

Composition is skewed to polar residues over residues 164 to 184 (ESSL…NANE) and 213 to 222 (PRNQNASVND). Positions 164-248 (ESSLTQGSGD…REESLCSDAS (85 aa)) are disordered. The span at 223–242 (STRENENSEDINRKRKREES) shows a compositional bias: basic and acidic residues. The DUF724 domain maps to 256-425 (LPFEKKLSIW…LQFQTTASAP (170 aa)). The stretch at 370-402 (AEKESIKIENERKILELQRLNEEVDKEIAQSKS) forms a coiled coil.

In terms of tissue distribution, expressed in flowers.

The protein localises to the nucleus. May be involved in the polar growth of plant cells via transportation of RNAs. This Arabidopsis thaliana (Mouse-ear cress) protein is DUF724 domain-containing protein 9.